A 137-amino-acid polypeptide reads, in one-letter code: NADPH-dependent 7-cyano-7-deazaguanine reductase (137 aa).

Catalysis depends on C50, which acts as the Thioimide intermediate. D57 (proton donor) is an active-site residue. Residues 72–74 (VEL) and 91–92 (HE) each bind substrate.

The protein belongs to the GTP cyclohydrolase I family. QueF type 1 subfamily.

It localises to the cytoplasm. The enzyme catalyses 7-aminomethyl-7-carbaguanine + 2 NADP(+) = 7-cyano-7-deazaguanine + 2 NADPH + 3 H(+). It participates in tRNA modification; tRNA-queuosine biosynthesis. In terms of biological role, catalyzes the NADPH-dependent reduction of 7-cyano-7-deazaguanine (preQ0) to 7-aminomethyl-7-deazaguanine (preQ1). The polypeptide is NADPH-dependent 7-cyano-7-deazaguanine reductase (Synechococcus sp. (strain CC9902)).